Here is a 286-residue protein sequence, read N- to C-terminus: Pyridoxal kinase PdxY (286 aa).

Residues Ser-9 and 44-45 each bind substrate; that span reads TQ. The ATP site is built by Asp-111, Glu-148, and Lys-181. Asp-222 lines the substrate pocket.

This sequence belongs to the pyridoxine kinase family. PdxY subfamily. In terms of assembly, homodimer. Mg(2+) serves as cofactor.

The catalysed reaction is pyridoxal + ATP = pyridoxal 5'-phosphate + ADP + H(+). It functions in the pathway cofactor metabolism; pyridoxal 5'-phosphate salvage; pyridoxal 5'-phosphate from pyridoxal: step 1/1. Pyridoxal kinase involved in the salvage pathway of pyridoxal 5'-phosphate (PLP). Catalyzes the phosphorylation of pyridoxal to PLP. The protein is Pyridoxal kinase PdxY of Actinobacillus pleuropneumoniae serotype 5b (strain L20).